The chain runs to 214 residues: Putative ras-related protein Rab-5B (214 aa).

56-63 lines the GTP pocket; that stretch reads GEMNTGKT. Residues 77–85 carry the Effector region motif; the sequence is TDSTIGAAF. Residues 103-107 and 161-164 contribute to the GTP site; these read DTAGQ and NKVD.

This sequence belongs to the small GTPase superfamily. Rab family. This sequence lacks the C-terminal cysteine motifs subject to isoprenylation in other Rab proteins.

This chain is Putative ras-related protein Rab-5B (rab5B), found in Dictyostelium discoideum (Social amoeba).